The sequence spans 278 residues: UPF0758 protein BURPS668_0979 (278 aa).

The segment at 1–64 is disordered; sequence MQYEIVSAGE…ATAAARRGRD (64 aa). Over residues 22-59 the composition is skewed to low complexity; sequence AAAPAAPSSAVPSSAALSSAALSSAARPTGAPPATAAA. Positions 156–278 constitute an MPN domain; sequence LVDSPGAVDD…TFSFAQAGWI (123 aa). Positions 227, 229, and 240 each coordinate Zn(2+). The short motif at 227-240 is the JAMM motif element; it reads HNHPSGAVRPSAAD.

It belongs to the UPF0758 family.

In Burkholderia pseudomallei (strain 668), this protein is UPF0758 protein BURPS668_0979.